A 117-amino-acid chain; its full sequence is Ribosome-binding factor A (117 aa).

It belongs to the RbfA family. In terms of assembly, monomer. Binds 30S ribosomal subunits, but not 50S ribosomal subunits or 70S ribosomes.

The protein resides in the cytoplasm. One of several proteins that assist in the late maturation steps of the functional core of the 30S ribosomal subunit. Associates with free 30S ribosomal subunits (but not with 30S subunits that are part of 70S ribosomes or polysomes). Required for efficient processing of 16S rRNA. May interact with the 5'-terminal helix region of 16S rRNA. The chain is Ribosome-binding factor A from Bacillus subtilis (strain 168).